Here is a 361-residue protein sequence, read N- to C-terminus: MKIDILSLFPGYFDGPLQTSILGRAIKQRLLDVQLTNLRDFGLGKWKQVDDTPFSGGGMLLMAEPVTSAIRSVRKENSKVIYLSPQGALLTAEKSRELAAASHLILLCGHYEGIDERAIESEVDEEISIGDYVLTNGGIAALVLIDAVSRFIPGVLGNQESAERDSLENGLLEGPQYTRPREFEGKEVPEVLLQGDHKAISQWRLEQSERRTYERRPDLYLNYLYKRSIDHKFDEETTTNRDHFKCDKISVVLEVNKLKRAKNFYCKVFGLDAMSCENKFCLPHEGKTIFWLREVQAEKKNIVTLSLSLDCACEEDFCYLLRRWELFGGKLLEKQADEHAVWALAQDLDGHAWIFSWHRMK.

Residues G109 and 129-134 contribute to the S-adenosyl-L-methionine site; that span reads IGDYVL.

It belongs to the RNA methyltransferase TrmD family. Homodimer.

It is found in the cytoplasm. It catalyses the reaction guanosine(37) in tRNA + S-adenosyl-L-methionine = N(1)-methylguanosine(37) in tRNA + S-adenosyl-L-homocysteine + H(+). Specifically methylates guanosine-37 in various tRNAs. This is tRNA (guanine-N(1)-)-methyltransferase (trmD) from Chlamydia pneumoniae (Chlamydophila pneumoniae).